The chain runs to 1874 residues: MIFQSFLLGNLVSLCMKIINSVVVVGLYYGFLTTFSIGPSYLFLLRARVMEEGTEKKVSATTGFITGQLMMFISIYYAPLHLALGRPHTITVLALPYLLFHFFWNNHKHFFDYGSTTRNLMRNLSIQCVFLNNLIFQLFNYFILPSSMLARLVNIYIFRCNNKMLFVTSSFVGWLIGHILFMKWLGLVLVWIRQNHSIRSNKYIRSNKYLVSELRIFMARIFSILLFITCVYYLGRIPSPILTKKLKETSKTEEGVESEEEGDVEIETTSEMKGTKQEQEGSTEEDPSSSLFSEEKEDSNKIDETEEIRVNGKEKTKDEFHFHFTETGYNNIPFYDYEDSYLNMNGNQENWKLKDKKAAKRKELFRFEKTLVTTLFDYNRWNHPFRYIKNDRFEKALRKEMSQYFFQIYESNGKQRISFTYLPSLATFGEMIKRKISLYTLEKSSSNEFDKRWVYTNKQKIKNLNNEFRNRIQALDKEFLFLDILEARTRLCNDDTKNEYFPKMYDPFLKGAYRGRIKTILSPSKTAIDNLRDTIGINRIHSILLPDINIDYQEFEQKANLFDKKQLLTEMGNFLPLAGEFDIEQKSNLNMKGLSLFSDQDQEKIDFEKERKIFKFLLNVIRTYPIDQKIQKESVGIKEIIKKVPRWSYKLITDLEQQSGEHQENVPVDHQIRSRKAKRVVIFTDNKENTDPNKDNDTSDQRNEVALIRYSQQSDFRRRIIKGSMRAQRRKIVIWELFQANVHSPLFLDRIKKSPRFSFDISVLIKLLFRNWTGKGAKFEILEYTDEETKKEDKKEKDKKEENKRKEQARIEIAEAWDTIPFAQVIRGSMLISQSFFRKYIRLPVLIIGKNIVRMILFQFPEWSEDLEGWNREMHIKCTYNGVQLSETEFPKNWLTDGIQIKILFPFCLKPWHRSKRRPSHRDLMKKKKQKDDFCFLTVWGMETELPFGSPRKQSSFFEPAVKELETKIIKFKRAYFLALKVLKRKTKLLLRVSKETKKWIIESFLFLKRLIKELSKLNPIILFRFREVYESNETKNEKDSIISNQIIHESFSKINSPNWTNSSLTEKKKKDMSHRTSTIRNQIERIIKEKKKITPTPRIYISPNKRNWNTKRLELPKNIWQILKKRNARLFSKFNSFIKIFVERIYIDIFLFIINITRLNTQLFIESIKKIMDKSINKANKERINKKNQNTIYFISTIKKSIDTINNKTNSYIFCDLSYLSQAYVFYKLSQTKVSNLYKLRSFFHYLGTSFFLKTEIKHSFEKQGIIQNELSLKKLPSYGMDQWKGWLKGHYQYDLPSIRWSKLISEKWRNRVNQHHMAQNQNFKLNSYEKGHYKKQKDSEVYSLLNQKENFQKNSRYDLLSYKYINYQKMRDPSIYESPFQVQVNKNQDFYYNSNTYKHNLFDMLESIPINPYLVKGNIRYMEKNTDRKYFDWKIIKFFLRKRVDIESWVKINTKSNQNTKIGTNNYQIIDKIDKKGPFYLLLPQNPKINSPSPKKLFLDWMGMNEEILNRPISSLEFWFFPEFVLLYNLYKMKPWVIPSKVLLFNLNLNENVISNNKNVDGKQKTECVIPSNKQIKNKNQNQKEKETPADQEDLRSDAQKQGNLGSVPPTKTKQEKDNEEDYAVSKIKAGKKKKQYKSKTEAELDFFLKRYLVFQLRWGDALNQRMINNVKIYCLLLRLINPRKITISSIQRREMSLDIMLIQKNLSLTELIKRGVLVIEPDRLSVKNDGQFIMYQILGISVVHKNKHQTNQGYREQTYVDKNRFDLLVPENILSTRCRRELRILICFTSKNRNSVDKNSVFCTKNNSSQLLDKRKDLDKDKKELIKLKFFLWPNYRLEDLACMNRYWFDTNNGSRFSMLRIYMYPRLKSH.

6 helical membrane passes run 18 to 38 (IINS…FSIG), 64 to 84 (FITG…HLAL), 87 to 107 (PHTI…WNNH), 124 to 144 (LSIQ…YFIL), 172 to 192 (VGWL…LVWI), and 221 to 241 (IFSI…PSPI). Disordered regions lie at residues 248–310 (ETSK…EIRV) and 1567–1624 (KTEC…NEED). Over residues 255 to 268 (GVESEEEGDVEIET) the composition is skewed to acidic residues. Basic and acidic residues-rich tracts occupy residues 298 to 310 (DSNK…EIRV) and 1584 to 1601 (NQKE…RSDA).

This sequence belongs to the TIC214 family. In terms of assembly, part of the Tic complex.

It is found in the plastid. It localises to the chloroplast inner membrane. Functionally, involved in protein precursor import into chloroplasts. May be part of an intermediate translocation complex acting as a protein-conducting channel at the inner envelope. In Coffea arabica (Arabian coffee), this protein is Protein TIC 214.